A 439-amino-acid polypeptide reads, in one-letter code: O-fucosyltransferase 13 (439 aa).

Residues 8–28 traverse the membrane as a helical; Signal-anchor for type II membrane protein segment; the sequence is PLFVFVLTFSLLLVVILLSPS. Asn104 and Asn119 each carry an N-linked (GlcNAc...) asparagine glycan. Residue 238 to 240 participates in substrate binding; it reads HLR. Residue Asn293 is glycosylated (N-linked (GlcNAc...) asparagine).

It belongs to the glycosyltransferase GT106 family.

It localises to the membrane. It participates in glycan metabolism. The protein is O-fucosyltransferase 13 of Arabidopsis thaliana (Mouse-ear cress).